The chain runs to 215 residues: Large ribosomal subunit protein uL4 (215 aa).

Residues 43–100 (AAKRQGTHSTKTRGEVSGGGKKPYRQKGSGRARQGSTRAPQFTGGGTVHGPKPRDYSQ) form a disordered region.

The protein belongs to the universal ribosomal protein uL4 family. Part of the 50S ribosomal subunit.

In terms of biological role, one of the primary rRNA binding proteins, this protein initially binds near the 5'-end of the 23S rRNA. It is important during the early stages of 50S assembly. It makes multiple contacts with different domains of the 23S rRNA in the assembled 50S subunit and ribosome. Functionally, forms part of the polypeptide exit tunnel. The chain is Large ribosomal subunit protein uL4 from Mycolicibacterium smegmatis (Mycobacterium smegmatis).